A 1240-amino-acid chain; its full sequence is DNA-directed RNA polymerase subunit beta (1240 aa).

Belongs to the RNA polymerase beta chain family. As to quaternary structure, the RNAP catalytic core consists of 2 alpha, 1 beta, 1 beta' and 1 omega subunit. When a sigma factor is associated with the core the holoenzyme is formed, which can initiate transcription.

It catalyses the reaction RNA(n) + a ribonucleoside 5'-triphosphate = RNA(n+1) + diphosphate. DNA-dependent RNA polymerase catalyzes the transcription of DNA into RNA using the four ribonucleoside triphosphates as substrates. The chain is DNA-directed RNA polymerase subunit beta from Rhodopirellula baltica (strain DSM 10527 / NCIMB 13988 / SH1).